A 225-amino-acid chain; its full sequence is Glycerol-3-phosphate acyltransferase (225 aa).

A run of 6 helical transmembrane segments spans residues 1-21 (MAIW…LGSF), 56-76 (GPGL…VALV), 95-115 (IGLW…LGHS), 134-154 (VLLV…ALVV), 159-178 (IVSL…MFVA), and 182-201 (LAYV…RHWA).

The protein belongs to the PlsY family. Probably interacts with PlsX.

The protein localises to the cell inner membrane. The enzyme catalyses an acyl phosphate + sn-glycerol 3-phosphate = a 1-acyl-sn-glycero-3-phosphate + phosphate. Its pathway is lipid metabolism; phospholipid metabolism. Its function is as follows. Catalyzes the transfer of an acyl group from acyl-phosphate (acyl-PO(4)) to glycerol-3-phosphate (G3P) to form lysophosphatidic acid (LPA). This enzyme utilizes acyl-phosphate as fatty acyl donor, but not acyl-CoA or acyl-ACP. This is Glycerol-3-phosphate acyltransferase from Acaryochloris marina (strain MBIC 11017).